The primary structure comprises 319 residues: Acetyl-coenzyme A carboxylase carboxyl transferase subunit alpha (319 aa).

Residues 43–296 (LRDKSIELTR…KKQLLFDLSE (254 aa)) enclose the CoA carboxyltransferase C-terminal domain.

This sequence belongs to the AccA family. Acetyl-CoA carboxylase is a heterohexamer composed of biotin carboxyl carrier protein (AccB), biotin carboxylase (AccC) and two subunits each of ACCase subunit alpha (AccA) and ACCase subunit beta (AccD).

It is found in the cytoplasm. The enzyme catalyses N(6)-carboxybiotinyl-L-lysyl-[protein] + acetyl-CoA = N(6)-biotinyl-L-lysyl-[protein] + malonyl-CoA. The protein operates within lipid metabolism; malonyl-CoA biosynthesis; malonyl-CoA from acetyl-CoA: step 1/1. Component of the acetyl coenzyme A carboxylase (ACC) complex. First, biotin carboxylase catalyzes the carboxylation of biotin on its carrier protein (BCCP) and then the CO(2) group is transferred by the carboxyltransferase to acetyl-CoA to form malonyl-CoA. This Baumannia cicadellinicola subsp. Homalodisca coagulata protein is Acetyl-coenzyme A carboxylase carboxyl transferase subunit alpha.